The primary structure comprises 440 residues: Thymidine phosphorylase (440 aa).

It belongs to the thymidine/pyrimidine-nucleoside phosphorylase family. As to quaternary structure, homodimer.

It catalyses the reaction thymidine + phosphate = 2-deoxy-alpha-D-ribose 1-phosphate + thymine. The protein operates within pyrimidine metabolism; dTMP biosynthesis via salvage pathway; dTMP from thymine: step 1/2. Its function is as follows. The enzymes which catalyze the reversible phosphorolysis of pyrimidine nucleosides are involved in the degradation of these compounds and in their utilization as carbon and energy sources, or in the rescue of pyrimidine bases for nucleotide synthesis. The chain is Thymidine phosphorylase from Proteus mirabilis (strain HI4320).